The chain runs to 782 residues: Spastin (782 aa).

Residues M1–S103 form a disordered region. The Cytoplasmic portion of the chain corresponds to M1–P115. A required for localization to punctate cytoplasmic foci region spans residues M1–G212. Over residues S8–S19 the composition is skewed to low complexity. The span at G25 to C34 shows a compositional bias: polar residues. Low complexity-rich tracts occupy residues S44 to P75 and T84 to S93. An intramembrane region (helical) is located at residues I116–Y136. Over L137–I782 the chain is Cytoplasmic. Residues M210–I782 form a sufficient for interaction with microtubules and microtubule severing region. The MIT domain occupies H235–L310. The disordered stretch occupies residues K325–M479. A compositionally biased stretch (low complexity) spans P334–Q343. Composition is skewed to polar residues over residues N408 to V426 and Q447 to I463. A required for interaction with microtubules region spans residues N465 to M479. G547–T554 is a binding site for ATP.

This sequence belongs to the AAA ATPase family. Spastin subfamily. Homohexamer. The homohexamer is stabilized by ATP-binding. The homohexamer may adopt a ring conformation through which microtubules pass prior to being severed. Interacts with microtubules. Interacts with atl; may be involved in microtubule dynamics.

It localises to the membrane. It is found in the cytoplasm. The protein resides in the cytoskeleton. The protein localises to the microtubule organizing center. Its subcellular location is the centrosome. It localises to the chromosome. It is found in the lipid droplet. It catalyses the reaction n ATP + n H2O + a microtubule = n ADP + n phosphate + (n+1) alpha/beta tubulin heterodimers.. In terms of biological role, ATP-dependent microtubule severing protein. Stimulates microtubule minus-end depolymerization and poleward microtubule flux in the mitotic spindle. Regulates microtubule stability in the neuromuscular junction synapse. Involved in lipid metabolism by regulating the size and distribution of lipid droplets. Involved in axon regeneration by regulating microtubule severing. In Drosophila grimshawi (Hawaiian fruit fly), this protein is Spastin.